We begin with the raw amino-acid sequence, 697 residues long: Glycine--tRNA ligase beta subunit (697 aa).

Belongs to the class-II aminoacyl-tRNA synthetase family. Tetramer of two alpha and two beta subunits.

The protein localises to the cytoplasm. It catalyses the reaction tRNA(Gly) + glycine + ATP = glycyl-tRNA(Gly) + AMP + diphosphate. The protein is Glycine--tRNA ligase beta subunit of Ralstonia nicotianae (strain ATCC BAA-1114 / GMI1000) (Ralstonia solanacearum).